The sequence spans 1529 residues: ABC multidrug transporter AFR2 (1529 aa).

The region spanning 144–394 (GSLRDLIGNR…FVDMGFHCPS (251 aa)) is the ABC transporter 1 domain. Residues Asn235 and Asn318 are each glycosylated (N-linked (GlcNAc...) asparagine). Transmembrane regions (helical) follow at residues 510–530 (LFGN…LPVT), 539–559 (ALLF…ILIL), 589–609 (IPYK…MTNL), 614–634 (GAYF…SMLF), and 648–668 (LAPA…AVNV). Asn742 carries an N-linked (GlcNAc...) asparagine glycan. The helical transmembrane segment at 757–777 (GILIGFFLFFTAIYLTATEFI) threads the bilayer. Residues 845 to 1087 (FSWKDVVYDI…ILIDYFEKNG (243 aa)) form the ABC transporter 2 domain. Residue 881 to 888 (GVSGAGKT) participates in ATP binding. Transmembrane regions (helical) follow at residues 1193–1213 (YIWA…FSFF), 1229–1249 (VFMM…NFVT), 1268–1288 (IFIL…GVII), 1314–1334 (LMFL…IMIV), and 1353–1373 (MCLI…FWVF). Asn1434 carries N-linked (GlcNAc...) asparagine glycosylation. Residues 1465 to 1485 (FGLLWVYVVFNVIAAIGIYWL) form a helical membrane-spanning segment. The segment covering 1493–1505 (GKERASEPEDVQE) has biased composition (basic and acidic residues). A disordered region spans residues 1493 to 1529 (GKERASEPEDVQEKQVPAQSTEKKYQSISRSSESTVA). The span at 1518–1529 (QSISRSSESTVA) shows a compositional bias: polar residues.

The protein belongs to the ABC transporter superfamily. ABCG family. PDR (TC 3.A.1.205) subfamily.

Its subcellular location is the cell membrane. The enzyme catalyses itraconazole(in) + ATP + H2O = itraconazole(out) + ADP + phosphate + H(+). The catalysed reaction is voriconazole(in) + ATP + H2O = voriconazole(out) + ADP + phosphate + H(+). It carries out the reaction fluconazole(in) + ATP + H2O = fluconazole(out) + ADP + phosphate + H(+). Functionally, pleiotropic ABC efflux transporter that confers resistance to structurally and functionally unrelated compounds including azoles such as fluconazole (FLC), itraconazole (ITC), posaconazole (POS), and voriconazole (VRC). The chain is ABC multidrug transporter AFR2 from Cryptococcus deuterogattii (strain R265) (Cryptococcus gattii VGII (strain R265)).